The following is a 464-amino-acid chain: UDP-N-acetylmuramoyl-tripeptide--D-alanyl-D-alanine ligase (464 aa).

Gly-125–Thr-131 is a binding site for ATP.

The protein belongs to the MurCDEF family. MurF subfamily.

It localises to the cytoplasm. The enzyme catalyses D-alanyl-D-alanine + UDP-N-acetyl-alpha-D-muramoyl-L-alanyl-gamma-D-glutamyl-meso-2,6-diaminopimelate + ATP = UDP-N-acetyl-alpha-D-muramoyl-L-alanyl-gamma-D-glutamyl-meso-2,6-diaminopimeloyl-D-alanyl-D-alanine + ADP + phosphate + H(+). Its pathway is cell wall biogenesis; peptidoglycan biosynthesis. Functionally, involved in cell wall formation. Catalyzes the final step in the synthesis of UDP-N-acetylmuramoyl-pentapeptide, the precursor of murein. The polypeptide is UDP-N-acetylmuramoyl-tripeptide--D-alanyl-D-alanine ligase (Borreliella burgdorferi (strain ATCC 35210 / DSM 4680 / CIP 102532 / B31) (Borrelia burgdorferi)).